Consider the following 506-residue polypeptide: ATP synthase subunit alpha (506 aa).

170 to 177 (GDRQTGKT) is a binding site for ATP.

It belongs to the ATPase alpha/beta chains family. In terms of assembly, F-type ATPases have 2 components, CF(1) - the catalytic core - and CF(0) - the membrane proton channel. CF(1) has five subunits: alpha(3), beta(3), gamma(1), delta(1), epsilon(1). CF(0) has four main subunits: a(1), b(1), b'(1) and c(9-12).

It is found in the cellular thylakoid membrane. The enzyme catalyses ATP + H2O + 4 H(+)(in) = ADP + phosphate + 5 H(+)(out). In terms of biological role, produces ATP from ADP in the presence of a proton gradient across the membrane. The alpha chain is a regulatory subunit. The polypeptide is ATP synthase subunit alpha (Synechococcus sp. (strain JA-2-3B'a(2-13)) (Cyanobacteria bacterium Yellowstone B-Prime)).